We begin with the raw amino-acid sequence, 514 residues long: Serine--tRNA ligase, cytoplasmic (514 aa).

M1 carries the post-translational modification N-acetylmethionine. Residues 9–61 (RVDKGGDPALIRETQEKRFKDPGLVDQLVKADSEWRRCRFRADNLNKLKNLCS) form an interaction with tRNA region. S241 is subject to Phosphoserine. 2 residues coordinate L-serine: T271 and R302. Residues 302 to 304 (RQE) and 318 to 321 (VHQF) each bind ATP. Position 323 is an N6-acetyllysine (K323). An L-serine-binding site is contributed by E325. 391–394 (ELVS) provides a ligand contact to ATP. Residue N427 coordinates L-serine. The disordered stretch occupies residues 473-514 (PAPIEQEPSKKQKKQHEGSKKKAAARDVTLENRLQNMEVTDA). Positions 479–502 (EPSKKQKKQHEGSKKKAAARDVTL) are enriched in basic and acidic residues. The Nuclear localization signal motif lies at 482-494 (KKQKKQHEGSKKK). Residues 504–514 (NRLQNMEVTDA) are compositionally biased toward polar residues.

It belongs to the class-II aminoacyl-tRNA synthetase family. Type-1 seryl-tRNA synthetase subfamily. In terms of assembly, homodimer. The tRNA molecule may bind across the dimer. Interacts with SIRT2. Interacts with METTL6; interaction is required for the tRNA N(3)-methylcytidine methyltransferase activity of METTL6. In terms of tissue distribution, brain.

The protein resides in the cytoplasm. It localises to the nucleus. It carries out the reaction tRNA(Ser) + L-serine + ATP = L-seryl-tRNA(Ser) + AMP + diphosphate + H(+). It catalyses the reaction tRNA(Sec) + L-serine + ATP = L-seryl-tRNA(Sec) + AMP + diphosphate + H(+). Its pathway is aminoacyl-tRNA biosynthesis; selenocysteinyl-tRNA(Sec) biosynthesis; L-seryl-tRNA(Sec) from L-serine and tRNA(Sec): step 1/1. In terms of biological role, catalyzes the attachment of serine to tRNA(Ser) in a two-step reaction: serine is first activated by ATP to form Ser-AMP and then transferred to the acceptor end of tRNA(Ser). Is probably also able to aminoacylate tRNA(Sec) with serine, to form the misacylated tRNA L-seryl-tRNA(Sec), which will be further converted into selenocysteinyl-tRNA(Sec). In the nucleus, binds to the VEGFA core promoter and prevents MYC binding and transcriptional activation by MYC. Recruits SIRT2 to the VEGFA promoter, promoting deacetylation of histone H4 at 'Lys-16' (H4K16). Thereby, inhibits the production of VEGFA and sprouting angiogenesis mediated by VEGFA. The protein is Serine--tRNA ligase, cytoplasmic of Homo sapiens (Human).